The sequence spans 230 residues: Thioredoxin domain-containing protein PLP3A (230 aa).

In terms of domain architecture, Thioredoxin spans 89 to 173; sequence VSEGDFLGEV…GVAMDRLVGF (85 aa). The segment at 197-230 is disordered; sequence LSKKKKEEDDEDAEYQESIRRSVRSSENLDSDSD.

It belongs to the phosducin family. As to quaternary structure, interacts with TUBB2, TUBB3, TUBB4 and TUBB5. As to expression, expressed in embryos, shoot meristems, leaf primordia, root meristems, floral meristems and young floral buds.

The protein resides in the cytoplasm. It is found in the nucleus. Functionally, tubulin-binding protein involved in microtubule formation. This Arabidopsis thaliana (Mouse-ear cress) protein is Thioredoxin domain-containing protein PLP3A (PLP3A).